Reading from the N-terminus, the 59-residue chain is U-scoloptoxin(23)-Er2a (59 aa).

This sequence belongs to the scoloptoxin-23 family. Post-translationally, contains 1 disulfide bond. In terms of tissue distribution, expressed by the venom gland.

It localises to the secreted. In Ethmostigmus rubripes (Giant centipede), this protein is U-scoloptoxin(23)-Er2a.